The chain runs to 154 residues: NADPH-dependent 7-cyano-7-deazaguanine reductase (154 aa).

The active-site Thioimide intermediate is Cys52. Asp59 (proton donor) is an active-site residue. Residues 74–76 (VES) and 93–94 (HE) each bind substrate.

Belongs to the GTP cyclohydrolase I family. QueF type 1 subfamily.

It localises to the cytoplasm. It catalyses the reaction 7-aminomethyl-7-carbaguanine + 2 NADP(+) = 7-cyano-7-deazaguanine + 2 NADPH + 3 H(+). The protein operates within tRNA modification; tRNA-queuosine biosynthesis. Functionally, catalyzes the NADPH-dependent reduction of 7-cyano-7-deazaguanine (preQ0) to 7-aminomethyl-7-deazaguanine (preQ1). In Paracoccus denitrificans (strain Pd 1222), this protein is NADPH-dependent 7-cyano-7-deazaguanine reductase.